The chain runs to 289 residues: UTP--glucose-1-phosphate uridylyltransferase 2 (289 aa).

The protein belongs to the UDPGP type 2 family.

It carries out the reaction alpha-D-glucose 1-phosphate + UTP + H(+) = UDP-alpha-D-glucose + diphosphate. The protein operates within glycolipid metabolism; diglucosyl-diacylglycerol biosynthesis. Catalyzes the formation of UDP-glucose from glucose-1-phosphate and UTP. This is an intermediate step in the biosynthesis of diglucosyl-diacylglycerol (Glc2-DAG), i.e. a glycolipid found in the membrane, which is also used as a membrane anchor for lipoteichoic acid (LTA). The sequence is that of UTP--glucose-1-phosphate uridylyltransferase 2 (gtaB2) from Staphylococcus saprophyticus subsp. saprophyticus (strain ATCC 15305 / DSM 20229 / NCIMB 8711 / NCTC 7292 / S-41).